Consider the following 641-residue polypeptide: Chaperone protein DnaK (641 aa).

Thr201 carries the post-translational modification Phosphothreonine; by autocatalysis. Positions 604–622 (ASAEQGGAAPGADAGNAGK) are enriched in low complexity. The disordered stretch occupies residues 604–625 (ASAEQGGAAPGADAGNAGKAQD).

The protein belongs to the heat shock protein 70 family.

Acts as a chaperone. The sequence is that of Chaperone protein DnaK from Stenotrophomonas maltophilia (strain R551-3).